The sequence spans 316 residues: tRNA pseudouridine synthase B (316 aa).

The active-site Nucleophile is the D38. A PUA domain is found at 238–312; that stretch reads YPEVIVKSSA…PVCVLARQAG (75 aa).

The protein belongs to the pseudouridine synthase TruB family. Type 1 subfamily.

The enzyme catalyses uridine(55) in tRNA = pseudouridine(55) in tRNA. Functionally, responsible for synthesis of pseudouridine from uracil-55 in the psi GC loop of transfer RNAs. The protein is tRNA pseudouridine synthase B of Pelotomaculum thermopropionicum (strain DSM 13744 / JCM 10971 / SI).